The following is a 454-amino-acid chain: tRNA(Ile)-lysidine synthase (454 aa).

Residue 31–36 (SGGADS) coordinates ATP.

Belongs to the tRNA(Ile)-lysidine synthase family.

It localises to the cytoplasm. It catalyses the reaction cytidine(34) in tRNA(Ile2) + L-lysine + ATP = lysidine(34) in tRNA(Ile2) + AMP + diphosphate + H(+). In terms of biological role, ligates lysine onto the cytidine present at position 34 of the AUA codon-specific tRNA(Ile) that contains the anticodon CAU, in an ATP-dependent manner. Cytidine is converted to lysidine, thus changing the amino acid specificity of the tRNA from methionine to isoleucine. The polypeptide is tRNA(Ile)-lysidine synthase (Porphyromonas gingivalis (strain ATCC BAA-308 / W83)).